A 446-amino-acid chain; its full sequence is Keratin, type I cytoskeletal 25 (446 aa).

The head stretch occupies residues 1 to 74 (MSLRLSSGSR…VNEGGLLSGN (74 aa)). A coil 1A region spans residues 75–110 (EKVTMQNLNDRLASYLDNVQALQEANADLEQKIKGW). Positions 75–390 (EKVTMQNLND…LLIGGDEGAC (316 aa)) constitute an IF rod domain. Residues 111–132 (YEKFGPGSCRGLDHDYSRYFPI) form a linker 1 region. Residues 133–224 (IDDLKNQIIT…KNHKEEMQAL (92 aa)) are coil 1B. A linker 12 region spans residues 225 to 247 (QCAAGGNVNVEMNAAPGVDLTVL). The coil 2 stretch occupies residues 248-386 (LNNMRAEYEA…ETYCLLIGGD (139 aa)). A tail region spans residues 387–446 (EGACKSSSYKSKDYGSGNAGNQIKDPVKAIVVKKVLEEVDQRSKILTTRLHSLEEKSQSN). Residue serine 438 is modified to Phosphoserine.

It belongs to the intermediate filament family. Heterodimer of a type I and a type II keratin. Heterodimer with type II keratin KRT5 leading to the formation of keratin intermediate filament (KIF) network. Interacts with KRT6A to form filaments.

Its subcellular location is the cytoplasm. Its function is as follows. Essential for the proper assembly of type I and type II keratin protein complexes and formation of keratin intermediate filaments in the inner root sheath (irs). Plays a role in the cytoskeleton organization. The sequence is that of Keratin, type I cytoskeletal 25 from Mus musculus (Mouse).